Reading from the N-terminus, the 700-residue chain is Acyl-coenzyme A oxidase 2 (700 aa).

The protein belongs to the acyl-CoA oxidase family. In terms of assembly, heteropentamer composed of five different subunits. It depends on FAD as a cofactor.

It localises to the peroxisome. The enzyme catalyses a 2,3-saturated acyl-CoA + O2 = a (2E)-enoyl-CoA + H2O2. The protein operates within lipid metabolism; peroxisomal fatty acid beta-oxidation. Its function is as follows. Oxidizes strain chain acyl-CoAs with a chain length of 10 to 14 carbons. Also active toward the 2S isomers of acyl-CoA-esters containing a 2-methyl group. The protein is Acyl-coenzyme A oxidase 2 (POX2) of Yarrowia lipolytica (strain CLIB 122 / E 150) (Yeast).